The chain runs to 227 residues: Cytochrome c oxidase subunit 2 (227 aa).

The Mitochondrial intermembrane portion of the chain corresponds to methionine 1 to serine 14. The helical transmembrane segment at proline 15 to methionine 45 threads the bilayer. At leucine 46–glutamine 59 the chain is on the mitochondrial matrix side. Residues glutamate 60–methionine 87 form a helical membrane-spanning segment. At aspartate 88–threonine 227 the chain is on the mitochondrial intermembrane side. Cu cation contacts are provided by histidine 161, cysteine 196, glutamate 198, cysteine 200, histidine 204, and methionine 207. Glutamate 198 lines the Mg(2+) pocket.

This sequence belongs to the cytochrome c oxidase subunit 2 family. Component of the cytochrome c oxidase (complex IV, CIV), a multisubunit enzyme composed of 14 subunits. The complex is composed of a catalytic core of 3 subunits MT-CO1, MT-CO2 and MT-CO3, encoded in the mitochondrial DNA, and 11 supernumerary subunits COX4I, COX5A, COX5B, COX6A, COX6B, COX6C, COX7A, COX7B, COX7C, COX8 and NDUFA4, which are encoded in the nuclear genome. The complex exists as a monomer or a dimer and forms supercomplexes (SCs) in the inner mitochondrial membrane with NADH-ubiquinone oxidoreductase (complex I, CI) and ubiquinol-cytochrome c oxidoreductase (cytochrome b-c1 complex, complex III, CIII), resulting in different assemblies (supercomplex SCI(1)III(2)IV(1) and megacomplex MCI(2)III(2)IV(2)). Found in a complex with TMEM177, COA6, COX18, COX20, SCO1 and SCO2. Interacts with TMEM177 in a COX20-dependent manner. Interacts with COX20. Interacts with COX16. It depends on Cu cation as a cofactor.

The protein localises to the mitochondrion inner membrane. The catalysed reaction is 4 Fe(II)-[cytochrome c] + O2 + 8 H(+)(in) = 4 Fe(III)-[cytochrome c] + 2 H2O + 4 H(+)(out). Component of the cytochrome c oxidase, the last enzyme in the mitochondrial electron transport chain which drives oxidative phosphorylation. The respiratory chain contains 3 multisubunit complexes succinate dehydrogenase (complex II, CII), ubiquinol-cytochrome c oxidoreductase (cytochrome b-c1 complex, complex III, CIII) and cytochrome c oxidase (complex IV, CIV), that cooperate to transfer electrons derived from NADH and succinate to molecular oxygen, creating an electrochemical gradient over the inner membrane that drives transmembrane transport and the ATP synthase. Cytochrome c oxidase is the component of the respiratory chain that catalyzes the reduction of oxygen to water. Electrons originating from reduced cytochrome c in the intermembrane space (IMS) are transferred via the dinuclear copper A center (CU(A)) of subunit 2 and heme A of subunit 1 to the active site in subunit 1, a binuclear center (BNC) formed by heme A3 and copper B (CU(B)). The BNC reduces molecular oxygen to 2 water molecules using 4 electrons from cytochrome c in the IMS and 4 protons from the mitochondrial matrix. In Gerbillus gerbillus (Lesser Egyptian gerbil), this protein is Cytochrome c oxidase subunit 2 (MT-CO2).